The sequence spans 121 residues: Ribosome-binding factor A (121 aa).

This sequence belongs to the RbfA family. As to quaternary structure, monomer. Binds 30S ribosomal subunits, but not 50S ribosomal subunits or 70S ribosomes.

It localises to the cytoplasm. Its function is as follows. One of several proteins that assist in the late maturation steps of the functional core of the 30S ribosomal subunit. Associates with free 30S ribosomal subunits (but not with 30S subunits that are part of 70S ribosomes or polysomes). Required for efficient processing of 16S rRNA. May interact with the 5'-terminal helix region of 16S rRNA. This Paraburkholderia phytofirmans (strain DSM 17436 / LMG 22146 / PsJN) (Burkholderia phytofirmans) protein is Ribosome-binding factor A.